The sequence spans 120 residues: Large ribosomal subunit protein eL34z (120 aa).

Residues 31–51 are disordered; it reads VYQTTKKRASGPKCPVTGKRI.

The protein belongs to the eukaryotic ribosomal protein eL34 family.

The protein is Large ribosomal subunit protein eL34z (RPL34A) of Arabidopsis thaliana (Mouse-ear cress).